A 454-amino-acid chain; its full sequence is Bifunctional protein GlmU (454 aa).

The segment at 1-226 is pyrophosphorylase; that stretch reads MALNVVILAA…AVEVEGANNR (226 aa). Residues 8-11, Lys22, Gln73, 78-79, 100-102, Gly137, Glu151, Asn166, and Asn224 contribute to the UDP-N-acetyl-alpha-D-glucosamine site; these read LAAG, GT, and YGD. Residue Asp102 participates in Mg(2+) binding. Asn224 serves as a coordination point for Mg(2+). The tract at residues 227–247 is linker; it reads VQLAQLERAYQARAAEKLMLE. The segment at 248 to 454 is N-acetyltransferase; the sequence is GANLRDPARI…GWARPVKKAK (207 aa). Residues Arg330 and Lys348 each contribute to the UDP-N-acetyl-alpha-D-glucosamine site. His360 functions as the Proton acceptor in the catalytic mechanism. UDP-N-acetyl-alpha-D-glucosamine is bound by residues Tyr363 and Asn374. Residues Ala377, 383-384, Ser402, Ala420, and Arg437 each bind acetyl-CoA; that span reads NY.

The protein in the N-terminal section; belongs to the N-acetylglucosamine-1-phosphate uridyltransferase family. In the C-terminal section; belongs to the transferase hexapeptide repeat family. Homotrimer. Requires Mg(2+) as cofactor.

It localises to the cytoplasm. It catalyses the reaction alpha-D-glucosamine 1-phosphate + acetyl-CoA = N-acetyl-alpha-D-glucosamine 1-phosphate + CoA + H(+). The enzyme catalyses N-acetyl-alpha-D-glucosamine 1-phosphate + UTP + H(+) = UDP-N-acetyl-alpha-D-glucosamine + diphosphate. The protein operates within nucleotide-sugar biosynthesis; UDP-N-acetyl-alpha-D-glucosamine biosynthesis; N-acetyl-alpha-D-glucosamine 1-phosphate from alpha-D-glucosamine 6-phosphate (route II): step 2/2. It participates in nucleotide-sugar biosynthesis; UDP-N-acetyl-alpha-D-glucosamine biosynthesis; UDP-N-acetyl-alpha-D-glucosamine from N-acetyl-alpha-D-glucosamine 1-phosphate: step 1/1. Its pathway is bacterial outer membrane biogenesis; LPS lipid A biosynthesis. Catalyzes the last two sequential reactions in the de novo biosynthetic pathway for UDP-N-acetylglucosamine (UDP-GlcNAc). The C-terminal domain catalyzes the transfer of acetyl group from acetyl coenzyme A to glucosamine-1-phosphate (GlcN-1-P) to produce N-acetylglucosamine-1-phosphate (GlcNAc-1-P), which is converted into UDP-GlcNAc by the transfer of uridine 5-monophosphate (from uridine 5-triphosphate), a reaction catalyzed by the N-terminal domain. This is Bifunctional protein GlmU from Shewanella piezotolerans (strain WP3 / JCM 13877).